Reading from the N-terminus, the 257-residue chain is 7-carboxy-7-deazaguanine synthase (257 aa).

Substrate is bound by residues Leu-29 to Gly-31 and Arg-44. One can recognise a Radical SAM core domain in the interval Leu-35–Asp-253. Positions 48, 52, and 55 each coordinate [4Fe-4S] cluster. Position 57 (Ser-57) interacts with Mg(2+). A substrate-binding site is contributed by Thr-90. Gly-92 provides a ligand contact to S-adenosyl-L-methionine. Residues Val-133–Glu-153 form a disordered region.

This sequence belongs to the radical SAM superfamily. 7-carboxy-7-deazaguanine synthase family. In terms of assembly, homodimer. [4Fe-4S] cluster is required as a cofactor. Requires S-adenosyl-L-methionine as cofactor. It depends on Mg(2+) as a cofactor.

The catalysed reaction is 6-carboxy-5,6,7,8-tetrahydropterin + H(+) = 7-carboxy-7-deazaguanine + NH4(+). The protein operates within purine metabolism; 7-cyano-7-deazaguanine biosynthesis. Functionally, catalyzes the complex heterocyclic radical-mediated conversion of 6-carboxy-5,6,7,8-tetrahydropterin (CPH4) to 7-carboxy-7-deazaguanine (CDG), a step common to the biosynthetic pathways of all 7-deazapurine-containing compounds. This chain is 7-carboxy-7-deazaguanine synthase, found in Halobacterium salinarum (strain ATCC 29341 / DSM 671 / R1).